The sequence spans 344 residues: L-rhamnose-proton symporter (344 aa).

A run of 10 helical transmembrane segments spans residues A4–A24, W38–L58, F68–I88, M101–I121, T137–L157, L175–A195, L214–I234, V259–G279, I290–L310, and V323–A343.

This sequence belongs to the L-rhamnose transporter (TC 2.A.7.6) family.

It localises to the cell inner membrane. The catalysed reaction is L-rhamnopyranose(in) + H(+)(in) = L-rhamnopyranose(out) + H(+)(out). Its function is as follows. Uptake of L-rhamnose across the cytoplasmic membrane with the concomitant transport of protons into the cell (symport system). In Shigella flexneri, this protein is L-rhamnose-proton symporter.